Reading from the N-terminus, the 492-residue chain is MIRLRTYAGLSFMATLAVIYHAFSSRGQFYPATVYLSTSKISLVLLLNMCLVLMLSLWHLVKFVFLGSLREAEVERLNEQAWRELMEILFAITIFRQDFSSGFLPLVVTLLLIKALHWLAQKRVEYIETTPSVSKLSHFRIVSFMGFLLLVDSLFMYSSIRHLIQSRQASVSLFFSFEYMILATTTVAIFVKYVFYVTDMLMDGQWEKKPVYTFYLELIRDLLHLSMYICFFFVIFMNYGVPLHLLRELYETFRNFQIRVSDYLRYRKITSNMNDRFPDATPEELTASDATCIICREEMTNAKKLICGHLFHVHCLRSWLERQQTCPTCRALVVPPENATSAAPGQRELHQGSQQGTSSSGNQGSEISSSAGVSNNSLSRHHARLQAAASAASVYGKSMVYPSANTVAWSSGVPGTEQVSTEPDQTLPQHNLPVENSHAYANMSETKLEEMRKSLETHLEILRNRLHFLETRKPESAGEPENKGKSVADAAE.

Residues 1-3 (MIR) are Cytoplasmic-facing. The chain crosses the membrane as a helical span at residues 4-24 (LRTYAGLSFMATLAVIYHAFS). At 25–40 (SRGQFYPATVYLSTSK) the chain is on the lumenal side. The helical transmembrane segment at 41-61 (ISLVLLLNMCLVLMLSLWHLV) threads the bilayer. At 62–98 (KFVFLGSLREAEVERLNEQAWRELMEILFAITIFRQD) the chain is on the cytoplasmic side. Residues 99–119 (FSSGFLPLVVTLLLIKALHWL) traverse the membrane as a helical segment. At 120-135 (AQKRVEYIETTPSVSK) the chain is on the lumenal side. Residues 136-156 (LSHFRIVSFMGFLLLVDSLFM) traverse the membrane as a helical segment. The Cytoplasmic portion of the chain corresponds to 157 to 170 (YSSIRHLIQSRQAS). A helical membrane pass occupies residues 171–191 (VSLFFSFEYMILATTTVAIFV). Over 192–221 (KYVFYVTDMLMDGQWEKKPVYTFYLELIRD) the chain is Lumenal. A helical membrane pass occupies residues 222 to 242 (LLHLSMYICFFFVIFMNYGVP). Residues 243–492 (LHLLRELYET…KGKSVADAAE (250 aa)) lie on the Cytoplasmic side of the membrane. The RING-type; atypical zinc finger occupies 292–330 (CIICREEMTNAKKLICGHLFHVHCLRSWLERQQTCPTCR). Disordered stretches follow at residues 339-379 (ATSA…NSLS) and 470-492 (ETRK…DAAE). Positions 351 to 378 (QGSQQGTSSSGNQGSEISSSAGVSNNSL) are enriched in low complexity. The segment covering 470–486 (ETRKPESAGEPENKGKS) has biased composition (basic and acidic residues).

The protein belongs to the HRD1 family.

The protein resides in the endoplasmic reticulum membrane. It catalyses the reaction S-ubiquitinyl-[E2 ubiquitin-conjugating enzyme]-L-cysteine + [acceptor protein]-L-lysine = [E2 ubiquitin-conjugating enzyme]-L-cysteine + N(6)-ubiquitinyl-[acceptor protein]-L-lysine.. It functions in the pathway protein modification; protein ubiquitination. In terms of biological role, probable component of the HRD1 ubiquitin ligase complex that mediates the rapid degradation of misfolded endoplasmic reticulum (ER) proteins, a process called ER-associated degradation (ERAD). Targets the misfolded LRR receptor kinase BRI1. Functions redundantly with HRD3B. This chain is ERAD-associated E3 ubiquitin-protein ligase HRD1A, found in Arabidopsis thaliana (Mouse-ear cress).